The chain runs to 895 residues: Pentatricopeptide repeat-containing protein At1g74600, chloroplastic (895 aa).

A chloroplast-targeting transit peptide spans 1-71 (MNCLANESLN…CNLRTTKILQ (71 aa)). PPR repeat units follow at residues 83-113 (DVFL…IPQP), 114-148 (DVVS…GFEA), 149-183 (NEIS…GYFF), 184-214 (YEVV…SLSA), 215-249 (NVYC…FQKP), 250-280 (DSYT…VIKC), 284-314 (DVFV…IPNP), 315-349 (SVVS…GVEI), 350-384 (NNCT…GFYL), 385-415 (DSSV…LDDI), 417-451 (RQNI…GLRT), 452-483 (DEFS…GLVL), 484-514 (DLTV…IPFK), 515-549 (DNAC…GTSP), 550-584 (DEST…GIDK), 585-615 (GMDL…LPEL), 616-650 (DPVS…GFTM), 651-685 (DSFA…GLCT), 686-716 (EPSV…INGP), 717-751 (DLIA…GFKP), 752-787 (DKVT…GIEP), and 788-818 (ENRH…MHIK). The segment at 824–895 (WGTLLAACKI…VQKEPGWSSV (72 aa)) is type E motif; degenerate.

It belongs to the PPR family. PCMP-E subfamily.

The protein resides in the plastid. The protein localises to the chloroplast. The protein is Pentatricopeptide repeat-containing protein At1g74600, chloroplastic (PCMP-E69) of Arabidopsis thaliana (Mouse-ear cress).